The chain runs to 271 residues: CAAX prenyl protease 2 (271 aa).

Over methionine 1–proline 9 the chain is Extracellular. Residues lysine 10–leucine 30 traverse the membrane as a helical segment. At serine 31–glycine 38 the chain is on the cytoplasmic side. The chain crosses the membrane as a helical span at residues isoleucine 39 to isoleucine 59. At alanine 60–asparagine 82 the chain is on the extracellular side. Residues leucine 83–isoleucine 105 traverse the membrane as a helical segment. The Cytoplasmic segment spans residues proline 106–aspartate 125. Residues phenylalanine 126 to phenylalanine 149 form a helical membrane-spanning segment. The active-site Proton donor/acceptor is glutamate 140. The Extracellular portion of the chain corresponds to aspartate 150–phenylalanine 159. A helical membrane pass occupies residues lysine 160–valine 179. The Proton donor/acceptor role is filled by histidine 173. Residues asparagine 180–isoleucine 192 are Cytoplasmic-facing. A helical transmembrane segment spans residues tryptophan 193 to cysteine 213. The Extracellular segment spans residues leucine 214 to serine 219. Residues isoleucine 220 to leucine 237 traverse the membrane as a helical segment. The Cytoplasmic segment spans residues alanine 238–threonine 243. The helical transmembrane segment at lysine 244–lysine 263 threads the bilayer. The Extracellular segment spans residues lysine 264 to glycine 271.

It belongs to the peptidase U48 family.

It localises to the cell membrane. The catalysed reaction is Hydrolyzes the peptide bond -P2-(S-farnesyl or geranylgeranyl)C-P1'-P2'-P3'-COOH where P1' and P2' are amino acids with aliphatic sidechains and P3' is any C-terminal residue.. With respect to regulation, activity is unaffected by metalloprotease inhibitors 5 mM EDTA and 5 mM Zn(2+). Activity partially inhibited by 1,10-phenanthroline and 1,7-phenanthroline. Its function is as follows. Protease involved in the processing of a variety of prenylated proteins containing the C-terminal CAAX motif, where C is a cysteine modified with an isoprenoid lipid, A is an aliphatic amino acid and X is any C-terminal amino acid. Proteolytically removes the C-terminal three residues of farnesylated proteins, leaving the prenylated cysteine as the new C-terminus. Hydrolysis depends on a farnesylated cysteine residue and no activity is shown towards geranylgeranylated peptides. This chain is CAAX prenyl protease 2, found in Methanococcus maripaludis (strain DSM 14266 / JCM 13030 / NBRC 101832 / S2 / LL).